We begin with the raw amino-acid sequence, 272 residues long: MPLGLKPTCSVCKTTSSSMWKKGPQGEILCHHCTGRGGAGGGGSCPGAAGGTGGGGGGTGGGFGAATFASTSAAPPQSNGGGGGKQSKQEIHRRSARLRNTKYKSAPAAEKKVSTKGKGRRHIFKLKNPIKAPESVSTIITAESIFYKGVYYQIGDVVSVIDEQDGKPYYAQIRGFVQDQYCEKSAALTWLIPTLASPRDQFDPASYIVGPEEDLPRKMEYLEFVCHAPSEYFKSRSSPFPTVPTRPEKGYIWTHVGPTPAITIKETVANHL.

Residues 9-33 (CSVCKTTSSSMWKKGPQGEILCHHC) form a GATA-type zinc finger. The interval 67-120 (TFASTSAAPPQSNGGGGGKQSKQEIHRRSARLRNTKYKSAPAAEKKVSTKGKGR) is disordered. K167 is modified (N6-acetyllysine). Residue K265 forms a Glycyl lysine isopeptide (Lys-Gly) (interchain with G-Cter in SUMO2) linkage.

The protein resides in the nucleus. This Bos taurus (Bovine) protein is GATA zinc finger domain-containing protein 1 (GATAD1).